The chain runs to 328 residues: Tetraacyldisaccharide 4'-kinase (328 aa).

55–62 (TAGGNGKT) serves as a coordination point for ATP.

It belongs to the LpxK family.

It carries out the reaction a lipid A disaccharide + ATP = a lipid IVA + ADP + H(+). Its pathway is glycolipid biosynthesis; lipid IV(A) biosynthesis; lipid IV(A) from (3R)-3-hydroxytetradecanoyl-[acyl-carrier-protein] and UDP-N-acetyl-alpha-D-glucosamine: step 6/6. Its function is as follows. Transfers the gamma-phosphate of ATP to the 4'-position of a tetraacyldisaccharide 1-phosphate intermediate (termed DS-1-P) to form tetraacyldisaccharide 1,4'-bis-phosphate (lipid IVA). The chain is Tetraacyldisaccharide 4'-kinase from Escherichia coli O17:K52:H18 (strain UMN026 / ExPEC).